A 942-amino-acid polypeptide reads, in one-letter code: Netrin receptor UNC5B-b (942 aa).

A signal peptide spans 1-30; that stretch reads MYLSRIPGGAALAALLVALLLCCNFPPSIA. Residues 31 to 380 are Extracellular-facing; that stretch reads GIEYSDVLPD…LESTGDVALY (350 aa). The 98-residue stretch at 51–148 folds into the Ig-like domain; it reads PHFLLEPEDA…AGTTKSKRSY (98 aa). Intrachain disulfides connect Cys-72-Cys-133, Cys-84-Cys-131, Cys-177-Cys-228, Cys-261-Cys-298, Cys-265-Cys-302, Cys-276-Cys-288, Cys-317-Cys-351, Cys-321-Cys-356, and Cys-329-Cys-341. Residues 150–245 form the Ig-like C2-type domain; sequence RIAYLRKNFD…KRRSTTATVI (96 aa). Residue Asn-225 is glycosylated (N-linked (GlcNAc...) asparagine). 2 consecutive TSP type-1 domains span residues 249–303 and 305–357; these read NGGW…TMCP and DGGW…GLCM. N-linked (GlcNAc...) asparagine glycosylation occurs at Asn-350. Residues 381–401 form a helical membrane-spanning segment; that stretch reads AGLVVAIFIIIILLMAVGIVV. At 402 to 942 the chain is on the cytoplasmic side; that stretch reads YRRNCREFDT…MLVMATDGDC (541 aa). Positions 541–684 constitute a ZU5 domain; the sequence is NSVTGTFGSL…LGTYAFVGES (144 aa). A UPA domain region spans residues 687-835; sequence RSAIKRLQLA…LEENVKSFDP (149 aa). A Death domain is found at 863–940; the sequence is ICNSLDAPNS…EMMLVMATDG (78 aa).

The protein belongs to the unc-5 family. As to quaternary structure, interacts (via extracellular domain) with flrt3 (via extracellular domain). Interacts with rnd1.

It localises to the cell membrane. Plays a role in cell-cell adhesion during embryonic development. Receptor for netrin required for axon guidance. Mediates axon repulsion of neuronal growth cones in the developing nervous system upon ligand binding. This Xenopus laevis (African clawed frog) protein is Netrin receptor UNC5B-b.